The sequence spans 842 residues: Elongation factor 2 (842 aa).

The 330-residue stretch at 17 to 346 folds into the tr-type G domain; it reads ANVRNMSVIA…MIVLHLPSPV (330 aa). Residues 26–33, 158–161, and 213–215 contribute to the GTP site; these read AHVDHGKS, NKVD, and SGL. Histidine 699 is modified (diphthamide).

The protein belongs to the TRAFAC class translation factor GTPase superfamily. Classic translation factor GTPase family. EF-G/EF-2 subfamily.

It localises to the cytoplasm. It carries out the reaction GTP + H2O = GDP + phosphate + H(+). Its pathway is protein biosynthesis; polypeptide chain elongation. In terms of biological role, catalyzes the GTP-dependent ribosomal translocation step during translation elongation. During this step, the ribosome changes from the pre-translocational (PRE) to the post-translocational (POST) state as the newly formed A-site-bound peptidyl-tRNA and P-site-bound deacylated tRNA move to the P and E sites, respectively. Catalyzes the coordinated movement of the two tRNA molecules, the mRNA and conformational changes in the ribosome. This Meyerozyma guilliermondii (strain ATCC 6260 / CBS 566 / DSM 6381 / JCM 1539 / NBRC 10279 / NRRL Y-324) (Yeast) protein is Elongation factor 2 (EFT2).